A 149-amino-acid polypeptide reads, in one-letter code: Envelope glycoprotein UL4 (149 aa).

Residues 1 to 18 (MMLRTWISLPMVLLDAYC) form the signal peptide. 9 N-linked (GlcNAc...) asparagine; by host glycosylation sites follow: Asn46, Asn51, Asn59, Asn67, Asn105, Asn109, Asn119, Asn136, and Asn145.

This sequence belongs to the RL11 family. N-glycosylated and possibly O-glycosylated.

Its subcellular location is the virion membrane. This Human cytomegalovirus (strain Merlin) (HHV-5) protein is Envelope glycoprotein UL4 (UL4).